The sequence spans 948 residues: RNA polymerase-associated protein RapA (948 aa).

Residues 164 to 332 (EVADRSAPRV…FARLRLLDPN (169 aa)) form the Helicase ATP-binding domain. Position 177–184 (177–184 (DEVGLGKT)) interacts with ATP. The short motif at 278–281 (DEAH) is the DEAH box element. Residues 473 to 627 (RVDWLIDTLK…TCPTGNALQH (155 aa)) form the Helicase C-terminal domain.

The protein belongs to the SNF2/RAD54 helicase family. RapA subfamily. Interacts with the RNAP. Has a higher affinity for the core RNAP than for the holoenzyme. Its ATPase activity is stimulated by binding to RNAP.

Its function is as follows. Transcription regulator that activates transcription by stimulating RNA polymerase (RNAP) recycling in case of stress conditions such as supercoiled DNA or high salt concentrations. Probably acts by releasing the RNAP, when it is trapped or immobilized on tightly supercoiled DNA. Does not activate transcription on linear DNA. Probably not involved in DNA repair. The sequence is that of RNA polymerase-associated protein RapA from Pseudomonas putida (strain W619).